Consider the following 85-residue polypeptide: uncharacterized protein (85 aa).

This is an uncharacterized protein from Fowlpox virus (strain NVSL) (FPV).